Consider the following 374-residue polypeptide: Flagellar P-ring protein 1 (374 aa).

The first 29 residues, 1–29, serve as a signal peptide directing secretion; that stretch reads MPGVRWVRIVGVACAALSALALSVTSASA.

It belongs to the FlgI family. As to quaternary structure, the basal body constitutes a major portion of the flagellar organelle and consists of four rings (L,P,S, and M) mounted on a central rod.

Its subcellular location is the periplasm. It is found in the bacterial flagellum basal body. Its function is as follows. Assembles around the rod to form the L-ring and probably protects the motor/basal body from shearing forces during rotation. The sequence is that of Flagellar P-ring protein 1 from Bradyrhizobium diazoefficiens (strain JCM 10833 / BCRC 13528 / IAM 13628 / NBRC 14792 / USDA 110).